Here is a 397-residue protein sequence, read N- to C-terminus: uncharacterized protein (397 aa).

Cys47, Cys53, Cys56, and Cys131 together coordinate [4Fe-4S] cluster. Positions 235, 262, 282, and 328 each coordinate S-adenosyl-L-methionine. Residue Cys354 is the Nucleophile of the active site.

This sequence belongs to the class I-like SAM-binding methyltransferase superfamily. RNA M5U methyltransferase family.

This is an uncharacterized protein from Zymomonas mobilis subsp. mobilis (strain ATCC 31821 / ZM4 / CP4).